The following is a 344-amino-acid chain: uncharacterized protein (344 aa).

One can recognise an HTH araC/xylS-type domain in the interval 242 to 343 (RGITALVRSK…GVAPSEYSRR (102 aa)). DNA-binding regions (H-T-H motif) lie at residues 263-284 (TDVAGELDMHPRTLRRRLAEEG) and 310-333 (VQQVSTRLGYTEVSTFSHAFKRWY).

This is an uncharacterized protein from Mycobacterium bovis (strain ATCC BAA-935 / AF2122/97).